The chain runs to 759 residues: ARF GTPase-activating protein GIT2 (759 aa).

The 124-residue stretch at 1 to 124 (MSKRLRSSEV…AFVHRLPCRD (124 aa)) folds into the Arf-GAP domain. The segment at 11 to 34 (CADCSGPDPSWASVNRGTFLCDEC) adopts a C4-type zinc-finger fold. ANK repeat units lie at residues 132 to 161 (DLSK…QANF), 166 to 195 (KGNT…DPGT), and 199 to 228 (SGKT…ELTD). The disordered stretch occupies residues 379 to 422 (QHSVESQDNDQPDYDSVASDEDTDLETTASKTNRQKSLDSDLSD). The span at 385-403 (QDNDQPDYDSVASDEDTDL) shows a compositional bias: acidic residues. S394 and S397 each carry phosphoserine. The residue at position 401 (T401) is a Phosphothreonine. S415, S418, and S421 each carry phosphoserine. Positions 437-478 (LVASEAKIQQLMKVNNNLSDELRIMQKKLQTLQSENSNLRKQ) form a coiled coil. Residues 480-499 (TTNVYQVQTGSEYTDTSNHS) are compositionally biased toward polar residues. 2 disordered regions span residues 480 to 538 (TTNV…EESR) and 554 to 643 (VTSS…TEDV). Y484 is modified (phosphotyrosine). Over residues 555 to 569 (TSSSSLPSFPSTLSW) the composition is skewed to low complexity. S559, S562, and S570 each carry phosphoserine. Residues 570–583 (SRDESARRASRLEK) show a composition bias toward basic and acidic residues. The segment covering 584 to 597 (QNSTPESDYDNTPN) has biased composition (polar residues). T587 is subject to Phosphothreonine. At S614 the chain carries Phosphoserine.

May form heterooligomers with GIT1. Directly interacts with protein Piccolo/PCLO. Interacts with PPFIA1 and PPFIA2. Interacts with ARHGEF7. Identified in a complex with ARHGEF6 and BIN2. Interacts with PAK3. Interacts with PXN/paxillin. Interacts with TGFB1I1. Forms a complex with EFNB1 and GRB4/NCK2.

Its function is as follows. GTPase-activating protein for ADP ribosylation factor family members, including ARF1. This Homo sapiens (Human) protein is ARF GTPase-activating protein GIT2 (GIT2).